Consider the following 184-residue polypeptide: SsrA-binding protein (184 aa).

The segment covering 1–11 (MAAKKSTPTDS) has biased composition (polar residues). A disordered region spans residues 1–31 (MAAKKSTPTDSGKSKGKKNKAQKGAGQKGAG).

It belongs to the SmpB family.

Its subcellular location is the cytoplasm. Its function is as follows. Required for rescue of stalled ribosomes mediated by trans-translation. Binds to transfer-messenger RNA (tmRNA), required for stable association of tmRNA with ribosomes. tmRNA and SmpB together mimic tRNA shape, replacing the anticodon stem-loop with SmpB. tmRNA is encoded by the ssrA gene; the 2 termini fold to resemble tRNA(Ala) and it encodes a 'tag peptide', a short internal open reading frame. During trans-translation Ala-aminoacylated tmRNA acts like a tRNA, entering the A-site of stalled ribosomes, displacing the stalled mRNA. The ribosome then switches to translate the ORF on the tmRNA; the nascent peptide is terminated with the 'tag peptide' encoded by the tmRNA and targeted for degradation. The ribosome is freed to recommence translation, which seems to be the essential function of trans-translation. This chain is SsrA-binding protein, found in Corynebacterium jeikeium (strain K411).